The primary structure comprises 325 residues: MITKRQLSILNAIVEDYVDFGQPIGSKTLIHRHHLDVSPATIRNEMKQLEEMHFIEKTHTSSGRVPSESGIRYYVNRLLEQTSHQSQNKIQRLNQLLIENHYDSSTALTNFAHELSMKSQYATLVVRPNHKQDVINDIHLIRANNHLIILVMVFSSGHVENIHFVSHAQLNNINLNKIANFLTEHFSFNRKVLTQNIESYFSQKEELLLANEVVEMINLQIGNQSNSIYMGGKVKLIDALNESNVSSIQPILQYIESNKITELLEDISTSQINVRIGKEIDDSLSDISIVTSQYHFDESLKGQIAVIGPTAMHYQNVIQLLNRIW.

This sequence belongs to the HrcA family.

Functionally, negative regulator of class I heat shock genes (grpE-dnaK-dnaJ and groELS operons). Prevents heat-shock induction of these operons. This Staphylococcus epidermidis (strain ATCC 35984 / DSM 28319 / BCRC 17069 / CCUG 31568 / BM 3577 / RP62A) protein is Heat-inducible transcription repressor HrcA.